Consider the following 90-residue polypeptide: YCFQKINRPGESDEGCILDGKLYPFGEISRTENCYRCSCSRDAMRCCTLFHTPVGYNKEKCKVVFNKESCNYDVVQKDDPSKECFVYSRV.

5 cysteine pairs are disulfide-bonded: C2/C16, C34/C70, C37/C46, C39/C47, and C61/C84. Valine amide is present on V90.

It belongs to the beta-microseminoprotein family.

The protein localises to the secreted. This chain is Beta-microseminoprotein (MSMB), found in Struthio camelus (Common ostrich).